The primary structure comprises 662 residues: Calcium-dependent protease (662 aa).

The region spanning 196 to 529 is the Peptidase S8 domain; sequence QWHLKETTIG…YGRINALKAV (334 aa). Residues aspartate 233, histidine 270, and serine 466 each act as charge relay system in the active site. One can recognise a P/Homo B domain in the interval 535–662; that stretch reads AQPEPVSIFT…IRSLTIELGF (128 aa).

Belongs to the peptidase S8 family.

The protein localises to the cytoplasm. In terms of biological role, degrades phycobiliproteins in vitro. Has a substrate specificity similar to that of trypsin. This Nostoc sp. (strain PCC 7120 / SAG 25.82 / UTEX 2576) protein is Calcium-dependent protease (prcA).